The chain runs to 425 residues: Histidine--tRNA ligase (425 aa).

The protein belongs to the class-II aminoacyl-tRNA synthetase family. As to quaternary structure, homodimer.

It is found in the cytoplasm. The enzyme catalyses tRNA(His) + L-histidine + ATP = L-histidyl-tRNA(His) + AMP + diphosphate + H(+). In Streptococcus uberis (strain ATCC BAA-854 / 0140J), this protein is Histidine--tRNA ligase.